Consider the following 34-residue polypeptide: Photosystem II reaction center protein Psb30 (34 aa).

Residues 7–27 (VAQLISLFLILTSGPAIIVLI) traverse the membrane as a helical segment.

The protein belongs to the Psb30/Ycf12 family. In terms of assembly, PSII is composed of 1 copy each of membrane proteins PsbA, PsbB, PsbC, PsbD, PsbE, PsbF, PsbH, PsbI, PsbJ, PsbK, PsbL, PsbM, PsbT, PsbX, PsbY, PsbZ, Psb30/Ycf12, peripheral proteins of the oxygen-evolving complex and a large number of cofactors. It forms dimeric complexes.

It localises to the plastid. Its subcellular location is the chloroplast thylakoid membrane. Functionally, a core subunit of photosystem II (PSII), probably helps stabilize the reaction center. This is Photosystem II reaction center protein Psb30 from Rhodomonas salina (Cryptomonas salina).